Consider the following 124-residue polypeptide: Small ribosomal subunit protein uS12 (124 aa).

Aspartate 89 is subject to 3-methylthioaspartic acid.

The protein belongs to the universal ribosomal protein uS12 family. In terms of assembly, part of the 30S ribosomal subunit. Contacts proteins S8 and S17. May interact with IF1 in the 30S initiation complex.

With S4 and S5 plays an important role in translational accuracy. In terms of biological role, interacts with and stabilizes bases of the 16S rRNA that are involved in tRNA selection in the A site and with the mRNA backbone. Located at the interface of the 30S and 50S subunits, it traverses the body of the 30S subunit contacting proteins on the other side and probably holding the rRNA structure together. The combined cluster of proteins S8, S12 and S17 appears to hold together the shoulder and platform of the 30S subunit. The protein is Small ribosomal subunit protein uS12 of Aliivibrio salmonicida (strain LFI1238) (Vibrio salmonicida (strain LFI1238)).